The primary structure comprises 780 residues: LPS-assembly protein LptD (780 aa).

An N-terminal signal peptide occupies residues 1–24; sequence MKKRFPTLLATLIWTALYSQHTLA.

Belongs to the LptD family. As to quaternary structure, component of the lipopolysaccharide transport and assembly complex. Interacts with LptE and LptA.

The protein resides in the cell outer membrane. In terms of biological role, together with LptE, is involved in the assembly of lipopolysaccharide (LPS) at the surface of the outer membrane. The protein is LPS-assembly protein LptD of Yersinia pseudotuberculosis serotype I (strain IP32953).